Consider the following 563-residue polypeptide: Tripeptidyl-peptidase 1 (563 aa).

The N-terminal stretch at 1-19 (MGLQACLLGLFALILSGKC) is a signal peptide. A propeptide spans 20-195 (SYSPEPDQRR…PEPQVTGTVG (176 aa)) (removed in mature form). Cys-111 and Cys-122 form a disulfide bridge. Residues 199-563 (GVTPSVIRKR…PALLKTLLNP (365 aa)) enclose the Peptidase S53 domain. 2 N-linked (GlcNAc...) asparagine glycosylation sites follow: Asn-210 and Asn-222. Residues Glu-272 and Asp-276 each act as charge relay system in the active site. Asn-286, Asn-313, and Asn-443 each carry an N-linked (GlcNAc...) asparagine glycan. 2 disulfide bridges follow: Cys-365/Cys-526 and Cys-522/Cys-537. Catalysis depends on Ser-475, which acts as the Charge relay system. Residues Asp-517 and Val-518 each contribute to the Ca(2+) site. 3 residues coordinate Ca(2+): Gly-539, Gly-541, and Asp-543.

In terms of assembly, monomer. Interacts with CLN5. Interacts with CLN3. Ca(2+) is required as a cofactor. Post-translationally, activated by autocatalytic proteolytical processing upon acidification. N-glycosylation is required for processing and activity.

It is found in the lysosome. The protein resides in the melanosome. It carries out the reaction Release of an N-terminal tripeptide from a polypeptide, but also has endopeptidase activity.. Its function is as follows. Lysosomal serine protease with tripeptidyl-peptidase I activity. May act as a non-specific lysosomal peptidase which generates tripeptides from the breakdown products produced by lysosomal proteinases. Requires substrates with an unsubstituted N-terminus. This chain is Tripeptidyl-peptidase 1 (TPP1), found in Macaca fascicularis (Crab-eating macaque).